Consider the following 300-residue polypeptide: Elongator complex protein 5 (300 aa).

Ser-252 carries the post-translational modification Phosphoserine. Positions 264 to 300 (QQALLRPRPGQATSHIFYEPDAYDDLDQEDPDDDLDI) are disordered. The span at 284-300 (DAYDDLDQEDPDDDLDI) shows a compositional bias: acidic residues.

This sequence belongs to the ELP5 family. As to quaternary structure, component of the elongator complex which consists of ELP1, ELP2, ELP3, ELP4, ELP5 and ELP6; in the complex, is required for optimal binding of ELP3 to ELP4. Post-translationally, tyrosine-phosphorylated. Ubiquitously expressed with high levels in heart, brain, liver, skeletal muscle and testis.

It localises to the nucleus. Its subcellular location is the cytoplasm. The protein operates within tRNA modification; 5-methoxycarbonylmethyl-2-thiouridine-tRNA biosynthesis. Component of the elongator complex which is required for multiple tRNA modifications, including mcm5U (5-methoxycarbonylmethyl uridine), mcm5s2U (5-methoxycarbonylmethyl-2-thiouridine), and ncm5U (5-carbamoylmethyl uridine). The elongator complex catalyzes formation of carboxymethyluridine in the wobble base at position 34 in tRNAs. Involved in cell migration. The sequence is that of Elongator complex protein 5 from Homo sapiens (Human).